The chain runs to 53 residues: Conotoxin Bu27 (53 aa).

Residues 1-12 (ASDGRNAVVHER) constitute a propeptide that is removed on maturation. Position 14 is a 4-hydroxyproline (proline 14). Position 15 is a 4-carboxyglutamate (glutamate 15). O-linked (HexNAc...) threonine glycans are attached at residues threonine 19 and threonine 21. 4-hydroxyproline occurs at positions 29, 34, 35, 43, 44, and 48. The residue at position 48 (proline 48) is a Proline amide. Residues 49–53 (GRRND) constitute a propeptide that is removed on maturation.

It belongs to the conotoxin A superfamily. In terms of processing, contains 3 disulfide bonds. As to expression, expressed by the venom duct.

The protein localises to the secreted. Probable neurotoxin with ion channel inhibitor activity. The sequence is that of Conotoxin Bu27 from Conus bullatus (Bubble cone).